The sequence spans 363 residues: UDP-N-acetylglucosamine--N-acetylmuramyl-(pentapeptide) pyrophosphoryl-undecaprenol N-acetylglucosamine transferase (363 aa).

UDP-N-acetyl-alpha-D-glucosamine-binding positions include 14–16, Asn122, Arg163, Ser190, and Gln285; that span reads TGG.

This sequence belongs to the glycosyltransferase 28 family. MurG subfamily.

The protein localises to the cell inner membrane. The enzyme catalyses di-trans,octa-cis-undecaprenyl diphospho-N-acetyl-alpha-D-muramoyl-L-alanyl-D-glutamyl-meso-2,6-diaminopimeloyl-D-alanyl-D-alanine + UDP-N-acetyl-alpha-D-glucosamine = di-trans,octa-cis-undecaprenyl diphospho-[N-acetyl-alpha-D-glucosaminyl-(1-&gt;4)]-N-acetyl-alpha-D-muramoyl-L-alanyl-D-glutamyl-meso-2,6-diaminopimeloyl-D-alanyl-D-alanine + UDP + H(+). The protein operates within cell wall biogenesis; peptidoglycan biosynthesis. Functionally, cell wall formation. Catalyzes the transfer of a GlcNAc subunit on undecaprenyl-pyrophosphoryl-MurNAc-pentapeptide (lipid intermediate I) to form undecaprenyl-pyrophosphoryl-MurNAc-(pentapeptide)GlcNAc (lipid intermediate II). In Prochlorococcus marinus (strain MIT 9301), this protein is UDP-N-acetylglucosamine--N-acetylmuramyl-(pentapeptide) pyrophosphoryl-undecaprenol N-acetylglucosamine transferase.